A 258-amino-acid chain; its full sequence is Phosphate import ATP-binding protein PstB (258 aa).

The region spanning 5-247 (IDVSGLNAYY…ERIFSNPSVQ (243 aa)) is the ABC transporter domain. 37 to 44 (GPSGCGKS) contributes to the ATP binding site.

The protein belongs to the ABC transporter superfamily. Phosphate importer (TC 3.A.1.7) family. As to quaternary structure, the complex is composed of two ATP-binding proteins (PstB), two transmembrane proteins (PstC and PstA) and a solute-binding protein (PstS).

The protein localises to the cell membrane. The catalysed reaction is phosphate(out) + ATP + H2O = ADP + 2 phosphate(in) + H(+). Part of the ABC transporter complex PstSACB involved in phosphate import. Responsible for energy coupling to the transport system. This chain is Phosphate import ATP-binding protein PstB, found in Streptomyces coelicolor (strain ATCC BAA-471 / A3(2) / M145).